Consider the following 139-residue polypeptide: Ribulose bisphosphate carboxylase small subunit (139 aa).

This sequence belongs to the RuBisCO small chain family. As to quaternary structure, heterohexadecamer of 8 large and 8 small subunits.

The protein localises to the plastid. It localises to the chloroplast. RuBisCO catalyzes two reactions: the carboxylation of D-ribulose 1,5-bisphosphate, the primary event in carbon dioxide fixation, as well as the oxidative fragmentation of the pentose substrate in the photorespiration process. Both reactions occur simultaneously and in competition at the same active site. Although the small subunit is not catalytic it is essential for maximal activity. The protein is Ribulose bisphosphate carboxylase small subunit of Pylaiella littoralis (Seaweed).